Reading from the N-terminus, the 339-residue chain is Phosphate acyltransferase (339 aa).

This sequence belongs to the PlsX family. In terms of assembly, homodimer. Probably interacts with PlsY.

The protein resides in the cytoplasm. The enzyme catalyses a fatty acyl-[ACP] + phosphate = an acyl phosphate + holo-[ACP]. The protein operates within lipid metabolism; phospholipid metabolism. Catalyzes the reversible formation of acyl-phosphate (acyl-PO(4)) from acyl-[acyl-carrier-protein] (acyl-ACP). This enzyme utilizes acyl-ACP as fatty acyl donor, but not acyl-CoA. The chain is Phosphate acyltransferase from Clostridium perfringens (strain ATCC 13124 / DSM 756 / JCM 1290 / NCIMB 6125 / NCTC 8237 / Type A).